Consider the following 76-residue polypeptide: Large ribosomal subunit protein uL29 (76 aa).

Belongs to the universal ribosomal protein uL29 family.

This chain is Large ribosomal subunit protein uL29, found in Corynebacterium efficiens (strain DSM 44549 / YS-314 / AJ 12310 / JCM 11189 / NBRC 100395).